The sequence spans 196 residues: UPF0056 membrane protein BU449 (196 aa).

6 helical membrane passes run 8 to 28 (TILL…MTIL), 45 to 65 (IIAL…LIIL), 71 to 91 (TVSI…IFPS), 105 to 125 (FLVP…TLML), 134 to 154 (MFYL…ILLS), and 174 to 194 (MGLV…RAWF).

Belongs to the UPF0056 (MarC) family.

Its subcellular location is the cell membrane. In Buchnera aphidicola subsp. Acyrthosiphon pisum (strain APS) (Acyrthosiphon pisum symbiotic bacterium), this protein is UPF0056 membrane protein BU449.